We begin with the raw amino-acid sequence, 209 residues long: Ribosomal RNA large subunit methyltransferase E (209 aa).

S-adenosyl-L-methionine is bound by residues Gly-63, Trp-65, Asp-83, Asp-99, and Asp-124. The Proton acceptor role is filled by Lys-164.

The protein belongs to the class I-like SAM-binding methyltransferase superfamily. RNA methyltransferase RlmE family.

It localises to the cytoplasm. The catalysed reaction is uridine(2552) in 23S rRNA + S-adenosyl-L-methionine = 2'-O-methyluridine(2552) in 23S rRNA + S-adenosyl-L-homocysteine + H(+). In terms of biological role, specifically methylates the uridine in position 2552 of 23S rRNA at the 2'-O position of the ribose in the fully assembled 50S ribosomal subunit. The polypeptide is Ribosomal RNA large subunit methyltransferase E (Shewanella frigidimarina (strain NCIMB 400)).